The primary structure comprises 222 residues: Probable nicotinate-nucleotide adenylyltransferase (222 aa).

The protein belongs to the NadD family.

It carries out the reaction nicotinate beta-D-ribonucleotide + ATP + H(+) = deamido-NAD(+) + diphosphate. The protein operates within cofactor biosynthesis; NAD(+) biosynthesis; deamido-NAD(+) from nicotinate D-ribonucleotide: step 1/1. Its function is as follows. Catalyzes the reversible adenylation of nicotinate mononucleotide (NaMN) to nicotinic acid adenine dinucleotide (NaAD). The polypeptide is Probable nicotinate-nucleotide adenylyltransferase (Stenotrophomonas maltophilia (strain K279a)).